The sequence spans 355 residues: Nicotinate-nucleotide--dimethylbenzimidazole phosphoribosyltransferase (355 aa).

The active-site Proton acceptor is the Glu321.

It belongs to the CobT family.

It carries out the reaction 5,6-dimethylbenzimidazole + nicotinate beta-D-ribonucleotide = alpha-ribazole 5'-phosphate + nicotinate + H(+). It functions in the pathway nucleoside biosynthesis; alpha-ribazole biosynthesis; alpha-ribazole from 5,6-dimethylbenzimidazole: step 1/2. Functionally, catalyzes the synthesis of alpha-ribazole-5'-phosphate from nicotinate mononucleotide (NAMN) and 5,6-dimethylbenzimidazole (DMB). In Desulfotalea psychrophila (strain LSv54 / DSM 12343), this protein is Nicotinate-nucleotide--dimethylbenzimidazole phosphoribosyltransferase.